We begin with the raw amino-acid sequence, 351 residues long: Spindolin (351 aa).

A signal peptide spans 1 to 20 (MNKFYYICIYINILYVCVSG).

Homodimer; disulfide-linked.

Its function is as follows. This protein is a spindle body protein. The sequence is that of Spindolin from Lepidoptera (butterflies and moths).